A 303-amino-acid chain; its full sequence is Phosphatidylglycerol--prolipoprotein diacylglyceryl transferase (303 aa).

4 consecutive transmembrane segments (helical) span residues 18–38, 58–78, 106–126, and 133–153; these read LGPF…LVGL, LLPI…VAFE, IWGG…SIIF, and EPFW…QAIG. R154 serves as a coordination point for a 1,2-diacyl-sn-glycero-3-phospho-(1'-sn-glycerol). A run of 3 helical transmembrane segments spans residues 193–213, 223–243, and 266–286; these read PTFL…IFLF, LPPG…RFWI, and IAQL…WRIY.

It belongs to the Lgt family.

The protein localises to the cell inner membrane. The enzyme catalyses L-cysteinyl-[prolipoprotein] + a 1,2-diacyl-sn-glycero-3-phospho-(1'-sn-glycerol) = an S-1,2-diacyl-sn-glyceryl-L-cysteinyl-[prolipoprotein] + sn-glycerol 1-phosphate + H(+). It participates in protein modification; lipoprotein biosynthesis (diacylglyceryl transfer). Catalyzes the transfer of the diacylglyceryl group from phosphatidylglycerol to the sulfhydryl group of the N-terminal cysteine of a prolipoprotein, the first step in the formation of mature lipoproteins. This is Phosphatidylglycerol--prolipoprotein diacylglyceryl transferase from Prochlorococcus marinus (strain NATL1A).